Here is a 260-residue protein sequence, read N- to C-terminus: Kallikrein-8 (260 aa).

Positions 1 to 28 (MGRPRPRAAKTWMFLLLLGGAWAGHSRA) are cleaved as a signal peptide. The propeptide occupies 29–32 (QEDK). In terms of domain architecture, Peptidase S1 spans 33-257 (VLGGHECQPH…YLDWIKKIIG (225 aa)). 6 disulfide bridges follow: Cys-39/Cys-173, Cys-58/Cys-74, Cys-145/Cys-246, Cys-152/Cys-218, Cys-184/Cys-198, and Cys-208/Cys-233. The active-site Charge relay system is the His-73. Asn-110 carries N-linked (GlcNAc...) asparagine glycosylation. The Charge relay system role is filled by Asp-120. The Charge relay system role is filled by Ser-212.

This sequence belongs to the peptidase S1 family. Kallikrein subfamily. Interacts with SPINK9. As to expression, isoform 1 is predominantly expressed in the pancreas. Isoform 2 is expressed in adult brain and hippocampus. Isoform 1 and isoform 2 are found in fetal brain and placenta. Detected in salivary gland, uterus, thymus, breast, testis and kidney but not in spleen, liver, lung or normal ovarian tissue. Displays an 11.5-fold increase in Alzheimer disease hippocampus compared to controls and is overexpressed in some ovarian carcinomas. Expressed at low levels in normal skin while high levels are found in psoriasis vulgaris, seborrheic keratosis, lichen planus and squamous cell carcinoma skin samples. Expressed in the keratinocytes.

It is found in the secreted. The protein localises to the cytoplasm. It carries out the reaction Cleavage of amide substrates following the basic amino acids Arg or Lys at the P1 position, with a preference for Arg over Lys.. Inhibited by a range of serine protease inhibitors including antipain, aprotinin, leupeptin, benzamidine and soybean trypsin inhibitor. Its function is as follows. Serine protease which is capable of degrading a number of proteins such as casein, fibrinogen, kininogen, fibronectin and collagen type IV. Also cleaves L1CAM in response to increased neural activity. Induces neurite outgrowth and fasciculation of cultured hippocampal neurons. Plays a role in the formation and maturation of orphan and small synaptic boutons in the Schaffer-collateral pathway, regulates Schaffer-collateral long-term potentiation in the hippocampus and is required for memory acquisition and synaptic plasticity. Involved in skin desquamation and keratinocyte proliferation. Plays a role in the secondary phase of pathogenesis following spinal cord injury. In Homo sapiens (Human), this protein is Kallikrein-8 (KLK8).